Reading from the N-terminus, the 274-residue chain is NH(3)-dependent NAD(+) synthetase (274 aa).

46–53 is an ATP binding site; it reads GISGGQDS. Asp-52 is a binding site for Mg(2+). Residue Arg-140 participates in deamido-NAD(+) binding. Thr-160 is a binding site for ATP. Glu-165 provides a ligand contact to Mg(2+). The deamido-NAD(+) site is built by Lys-173 and Asp-180. ATP-binding residues include Lys-189 and Thr-211. 260–261 provides a ligand contact to deamido-NAD(+); it reads HK.

The protein belongs to the NAD synthetase family. As to quaternary structure, homodimer.

It catalyses the reaction deamido-NAD(+) + NH4(+) + ATP = AMP + diphosphate + NAD(+) + H(+). Its pathway is cofactor biosynthesis; NAD(+) biosynthesis; NAD(+) from deamido-NAD(+) (ammonia route): step 1/1. Its function is as follows. Catalyzes the ATP-dependent amidation of deamido-NAD to form NAD. Uses ammonia as a nitrogen source. The protein is NH(3)-dependent NAD(+) synthetase of Listeria welshimeri serovar 6b (strain ATCC 35897 / DSM 20650 / CCUG 15529 / CIP 8149 / NCTC 11857 / SLCC 5334 / V8).